A 428-amino-acid polypeptide reads, in one-letter code: Glutamyl-tRNA reductase (428 aa).

Residues 55-58, serine 114, 119-121, and glutamine 125 contribute to the substrate site; these read TCNR and ETQ. Cysteine 56 functions as the Nucleophile in the catalytic mechanism. Residue 194-199 coordinates NADP(+); sequence GAGEMI.

The protein belongs to the glutamyl-tRNA reductase family. As to quaternary structure, homodimer.

The catalysed reaction is (S)-4-amino-5-oxopentanoate + tRNA(Glu) + NADP(+) = L-glutamyl-tRNA(Glu) + NADPH + H(+). Its pathway is porphyrin-containing compound metabolism; protoporphyrin-IX biosynthesis; 5-aminolevulinate from L-glutamyl-tRNA(Glu): step 1/2. Its function is as follows. Catalyzes the NADPH-dependent reduction of glutamyl-tRNA(Glu) to glutamate 1-semialdehyde (GSA). This is Glutamyl-tRNA reductase from Paraburkholderia xenovorans (strain LB400).